We begin with the raw amino-acid sequence, 275 residues long: 2,3,4,5-tetrahydropyridine-2,6-dicarboxylate N-succinyltransferase (275 aa).

It belongs to the transferase hexapeptide repeat family.

The protein resides in the cytoplasm. The catalysed reaction is (S)-2,3,4,5-tetrahydrodipicolinate + succinyl-CoA + H2O = (S)-2-succinylamino-6-oxoheptanedioate + CoA. It participates in amino-acid biosynthesis; L-lysine biosynthesis via DAP pathway; LL-2,6-diaminopimelate from (S)-tetrahydrodipicolinate (succinylase route): step 1/3. The chain is 2,3,4,5-tetrahydropyridine-2,6-dicarboxylate N-succinyltransferase from Ralstonia pickettii (strain 12J).